A 388-amino-acid polypeptide reads, in one-letter code: MANDYFFTSESVSEGHPDKVADQISDSILDAILAQDPTARVAAETLCNTGLVVLAGEITTNANVDYIQVARNTLREIGYDNTDYGIDYKGCAVLVAYDKQSPDIAQGVDKAHDDGLDQGAGDQGLMFGYACDETAELMPLPIHLSHRLVERQSQLRRDGRLNWLRPDAKSQVTLRYVDGKPDSIDTVVLSTQHDEDISLEKLREAVIEEIIKPVLPKHLIKGAINFLVNPTGRFVIGGPQGDCGLTGRKIIVDTYGGAAPHGGGAFSGKDPSKVDRSAAYAGRYVAKNVVAAGLASKCLIQISYAIGVAKPTSVMVSAFGTGKIVDEKIAQLVSEHFDLRPKGIVKMLNLLRPIYKKTAAYGHFGREEPEFSWEQTDKAAALRAAAGL.

Residue His16 coordinates ATP. Mg(2+) is bound at residue Asp18. K(+) is bound at residue Glu44. L-methionine-binding residues include Glu57 and Gln100. The segment at 100–110 (QSPDIAQGVDK) is flexible loop. ATP contacts are provided by residues 167-169 (DAK), 233-234 (RF), Asp242, 248-249 (RK), Ala265, and Lys269. An L-methionine-binding site is contributed by Asp242. Lys273 is an L-methionine binding site.

It belongs to the AdoMet synthase family. As to quaternary structure, homotetramer; dimer of dimers. It depends on Mg(2+) as a cofactor. Requires K(+) as cofactor.

It localises to the cytoplasm. It catalyses the reaction L-methionine + ATP + H2O = S-adenosyl-L-methionine + phosphate + diphosphate. It participates in amino-acid biosynthesis; S-adenosyl-L-methionine biosynthesis; S-adenosyl-L-methionine from L-methionine: step 1/1. Its function is as follows. Catalyzes the formation of S-adenosylmethionine (AdoMet) from methionine and ATP. The overall synthetic reaction is composed of two sequential steps, AdoMet formation and the subsequent tripolyphosphate hydrolysis which occurs prior to release of AdoMet from the enzyme. This chain is S-adenosylmethionine synthase, found in Polynucleobacter necessarius subsp. necessarius (strain STIR1).